Reading from the N-terminus, the 429-residue chain is Trigger factor (429 aa).

In terms of domain architecture, PPIase FKBP-type spans 161–246 (EDRVTIDFTG…LKKVEERELP (86 aa)).

It belongs to the FKBP-type PPIase family. Tig subfamily. In terms of assembly, homodimer and monomer. In vivo most of the ribosomes are in complex with monomeric TF. Uncomplexed TF, however, is in a monomer-dimer equilibrium with approximately two thirds of TF existing in a dimeric state.

The protein resides in the cytoplasm. The catalysed reaction is [protein]-peptidylproline (omega=180) = [protein]-peptidylproline (omega=0). Involved in protein export. Acts as a chaperone by maintaining the newly synthesized protein in an open conformation. Functions as a peptidyl-prolyl cis-trans isomerase. The sequence is that of Trigger factor from Escherichia coli O45:K1 (strain S88 / ExPEC).